A 157-amino-acid chain; its full sequence is Protein-export protein SecB (157 aa).

This sequence belongs to the SecB family. Homotetramer, a dimer of dimers. One homotetramer interacts with 1 SecA dimer.

The protein localises to the cytoplasm. Its function is as follows. One of the proteins required for the normal export of preproteins out of the cell cytoplasm. It is a molecular chaperone that binds to a subset of precursor proteins, maintaining them in a translocation-competent state. It also specifically binds to its receptor SecA. The protein is Protein-export protein SecB of Shewanella oneidensis (strain ATCC 700550 / JCM 31522 / CIP 106686 / LMG 19005 / NCIMB 14063 / MR-1).